We begin with the raw amino-acid sequence, 159 residues long: Phosphopantetheine adenylyltransferase (159 aa).

T10 serves as a coordination point for substrate. ATP contacts are provided by residues 10-11 (TF) and H18. K42, M74, and R88 together coordinate substrate. Residues 89-91 (GLR), E99, and 124-130 (WSFISSS) each bind ATP.

Belongs to the bacterial CoaD family. In terms of assembly, homohexamer. It depends on Mg(2+) as a cofactor.

It is found in the cytoplasm. It carries out the reaction (R)-4'-phosphopantetheine + ATP + H(+) = 3'-dephospho-CoA + diphosphate. It participates in cofactor biosynthesis; coenzyme A biosynthesis; CoA from (R)-pantothenate: step 4/5. Functionally, reversibly transfers an adenylyl group from ATP to 4'-phosphopantetheine, yielding dephospho-CoA (dPCoA) and pyrophosphate. The sequence is that of Phosphopantetheine adenylyltransferase from Escherichia coli O7:K1 (strain IAI39 / ExPEC).